Here is a 313-residue protein sequence, read N- to C-terminus: Porphobilinogen deaminase (313 aa).

Residue Cys242 is modified to S-(dipyrrolylmethanemethyl)cysteine.

It belongs to the HMBS family. Monomer. Dipyrromethane serves as cofactor.

It catalyses the reaction 4 porphobilinogen + H2O = hydroxymethylbilane + 4 NH4(+). Its pathway is porphyrin-containing compound metabolism; protoporphyrin-IX biosynthesis; coproporphyrinogen-III from 5-aminolevulinate: step 2/4. Functionally, tetrapolymerization of the monopyrrole PBG into the hydroxymethylbilane pre-uroporphyrinogen in several discrete steps. The sequence is that of Porphobilinogen deaminase from Pectobacterium atrosepticum (strain SCRI 1043 / ATCC BAA-672) (Erwinia carotovora subsp. atroseptica).